The primary structure comprises 338 residues: Large ribosomal subunit protein uL10 (338 aa).

The interval 297 to 338 (PSAQQTQTQQSTAEEKKEEKKEEEKKGPSEEEIGSGLASLFG) is disordered. The segment covering 298-308 (SAQQTQTQQST) has biased composition (low complexity). A compositionally biased stretch (basic and acidic residues) spans 309–325 (AEEKKEEKKEEEKKGPS).

It belongs to the universal ribosomal protein uL10 family. In terms of assembly, part of the 50S ribosomal subunit. Forms part of the ribosomal stalk which helps the ribosome interact with GTP-bound translation factors. Forms a heptameric L10(L12)2(L12)2(L12)2 complex, where L10 forms an elongated spine to which the L12 dimers bind in a sequential fashion.

Its function is as follows. Forms part of the ribosomal stalk, playing a central role in the interaction of the ribosome with GTP-bound translation factors. The polypeptide is Large ribosomal subunit protein uL10 (Saccharolobus islandicus (strain Y.N.15.51 / Yellowstone #2) (Sulfolobus islandicus)).